The following is a 425-amino-acid chain: Metacaspase-1 (425 aa).

The interval 1–110 (MSYNSNPYNG…PQLPNTQTQS (110 aa)) is disordered. Low complexity predominate over residues 13-28 (YPPYNTYTRPNYSPNN). Composition is skewed to polar residues over residues 29–38 (GSQSNNTVHQ) and 88–110 (TGANSYGNPNYSGPQLPNTQTQS). Residues His214 and Cys270 contribute to the active site.

It belongs to the peptidase C14B family.

Its subcellular location is the cytoplasm. The protein resides in the nucleus. Its function is as follows. Involved in cell death (apoptosis). The polypeptide is Metacaspase-1 (pca1) (Schizosaccharomyces pombe (strain 972 / ATCC 24843) (Fission yeast)).